Here is a 401-residue protein sequence, read N- to C-terminus: Zinc finger CCHC domain-containing protein 12 (401 aa).

Disordered regions lie at residues 1–20 and 270–292; these read MASILSRMGNSRGQNSPLPP and DSDEDVILVEPDDPPLPSSSAGP. Positions 270-282 are enriched in acidic residues; it reads DSDEDVILVEPDD. Residues 345-362 form a CCHC-type zinc finger; it reads VHCSHCGEEGHSKETCDN.

The protein belongs to the ZCCHC12 family. As to quaternary structure, interacts with SMAD1 and CREB-binding protein (CBP). Forms a protein-DNA complex through its association with SMAD1.

Its function is as follows. Transcriptional coactivator in the bone morphogenetic protein (BMP)-signaling pathway. It positively modulates BMP signaling by interacting with SMAD1 and associating with CBP in the transcription complex. It contributes to the BMP-induced enhancement of cholinergic-neuron-specific gene expression. This Rattus norvegicus (Rat) protein is Zinc finger CCHC domain-containing protein 12 (Zcchc12).